We begin with the raw amino-acid sequence, 888 residues long: Patched domain-containing protein 1 (888 aa).

Residues F20 to G40 form a helical membrane-spanning segment. N-linked (GlcNAc...) asparagine glycosylation is found at N77, N133, and N167. The 160-residue stretch at S268–F427 folds into the SSD domain. Helical transmembrane passes span V273 to V293 and W298 to I318. N-linked (GlcNAc...) asparagine glycans are attached at residues N319 and N326. 4 helical membrane-spanning segments follow: residues T328–L348, L373–F393, C407–F427, and P502–V522. N-linked (GlcNAc...) asparagine glycans are attached at residues N568, N599, and N608. A run of 2 helical transmembrane segments spans residues A707–I727 and V738–I758. N762 is a glycosylation site (N-linked (GlcNAc...) asparagine). A helical membrane pass occupies residues G795–V815. A glycan (N-linked (GlcNAc...) asparagine) is linked at N818. A helical membrane pass occupies residues C826–L846.

This sequence belongs to the patched family. In terms of tissue distribution, broadly expressed in the brain. Selectively expressed in the thalamic reticular nucleus (TRN) in early development and continues to be enriched in this structure throughout adult life.

It localises to the cell membrane. Its subcellular location is the cell projection. It is found in the dendritic spine. Required for the development and function of the thalamic reticular nucleus (TRN), a part of the thalamus that is critical for thalamocortical transmission, generation of sleep rhythms, sensorimotor processing and attention. Can bind cholesterol in vitro. This Mus musculus (Mouse) protein is Patched domain-containing protein 1.